Here is a 1069-residue protein sequence, read N- to C-terminus: Degenerin-like protein del-10 (1069 aa).

At 1 to 95 the chain is on the cytoplasmic side; it reads MVRMAERLAE…LNAASPVTRG (95 aa). The helical transmembrane segment at 96–116 threads the bilayer; the sequence is LWCMIIIAFVILVLVQCYSQI. At 117-830 the chain is on the extracellular side; that stretch reads KLYISEPVAT…FWSLACDIGG (714 aa). N-linked (GlcNAc...) asparagine glycosylation is found at N216, N290, N374, N454, N539, N545, and N584. A helical membrane pass occupies residues 831-851; that stretch reads ALGLFLGASLLTIIEIVYLCI. The Cytoplasmic segment spans residues 852–1069; the sequence is QYGLCGKRAR…EEDDDKHSYV (218 aa). 2 disordered regions span residues 898–948 and 960–1069; these read KKSQ…TLTP and RNSQ…HSYV. Residues 915 to 928 are compositionally biased toward basic and acidic residues; it reads GDKFRSRASSEESK. Residues 938-948 are compositionally biased toward polar residues; sequence NDPSGNSTLTP. Residues 967-978 show a composition bias toward basic and acidic residues; it reads YHDDHHPEDHYY.

It belongs to the amiloride-sensitive sodium channel (TC 1.A.6) family.

It localises to the membrane. The protein is Degenerin-like protein del-10 of Caenorhabditis elegans.